The chain runs to 263 residues: Receptor expression-enhancing protein 3-A (263 aa).

A run of 2 helical transmembrane segments spans residues 2-22 (VSWI…PAYF) and 35-55 (YVRW…EAIA). 2 disordered regions span residues 161–228 (GDET…SMRS) and 240–263 (YASL…AHHL). Residues 199 to 214 (DDNTDEDVEVNSEDEV) are compositionally biased toward acidic residues. The segment covering 242 to 251 (SLKHKPKKRP) has biased composition (basic residues).

Belongs to the DP1 family.

The protein resides in the endoplasmic reticulum membrane. In terms of biological role, microtubule-binding protein required to ensure proper cell division and nuclear envelope reassembly by sequestering the endoplasmic reticulum away from chromosomes during mitosis. Probably acts by clearing the endoplasmic reticulum membrane from metaphase chromosomes. The chain is Receptor expression-enhancing protein 3-A (reep3-a) from Xenopus laevis (African clawed frog).